The primary structure comprises 149 residues: Large ribosomal subunit protein bL9 (149 aa).

The protein belongs to the bacterial ribosomal protein bL9 family.

Binds to the 23S rRNA. The protein is Large ribosomal subunit protein bL9 of Histophilus somni (strain 129Pt) (Haemophilus somnus).